A 113-amino-acid chain; its full sequence is Crustacean hyperglycemic hormones B (113 aa).

The signal sequence occupies residues 1 to 26; it reads MVAFRMMSMALLVVVASSWWASPVEA. Disulfide bonds link cysteine 46–cysteine 82, cysteine 62–cysteine 78, and cysteine 65–cysteine 91. Position 111 is a valine amide (valine 111).

It belongs to the arthropod CHH/MIH/GIH/VIH hormone family. Expressed at a constant level in the eyestalks of juveniles and mature females. A low level expression is seen in the central nervous system.

The protein resides in the secreted. In terms of biological role, hormone found in the sinus gland of isopods and decapods which controls the blood sugar level. Has a secretagogue action over the amylase released from the midgut gland. May act as a stress hormone and may be involved in the control of molting and reproduction. This chain is Crustacean hyperglycemic hormones B, found in Metapenaeus ensis (Greasyback shrimp).